Consider the following 217-residue polypeptide: MPEGARRDLAGLRREYTRAGLAEDGADPDPIRQFGRWFEEALRAGLYEPNAMVLATATPDGRPSARTVLLKGFDERGFVFYTNYGGRKSREIEANPRVALLFYWGELERQVRVEGTAGRTSEEESDAYFATRPRGSQLGAWASRQSEPAESREELERRLAELERRFEGRPVPRPPFWGGYRVRPERIEFWQGRENRLHDRLLYAREGPGWRRVRLQP.

Substrate is bound by residues 13-16 (RREY) and K71. FMN contacts are provided by residues 66–71 (RTVLLK), 81–82 (YT), R87, K88, and Q110. Residues Y128, R132, and S136 each coordinate substrate. FMN contacts are provided by residues 145-146 (QS) and W190. Residue 196–198 (RLH) coordinates substrate. Residue R200 coordinates FMN.

The protein belongs to the pyridoxamine 5'-phosphate oxidase family. In terms of assembly, homodimer. FMN serves as cofactor.

It carries out the reaction pyridoxamine 5'-phosphate + O2 + H2O = pyridoxal 5'-phosphate + H2O2 + NH4(+). The enzyme catalyses pyridoxine 5'-phosphate + O2 = pyridoxal 5'-phosphate + H2O2. The protein operates within cofactor metabolism; pyridoxal 5'-phosphate salvage; pyridoxal 5'-phosphate from pyridoxamine 5'-phosphate: step 1/1. It functions in the pathway cofactor metabolism; pyridoxal 5'-phosphate salvage; pyridoxal 5'-phosphate from pyridoxine 5'-phosphate: step 1/1. Its function is as follows. Catalyzes the oxidation of either pyridoxine 5'-phosphate (PNP) or pyridoxamine 5'-phosphate (PMP) into pyridoxal 5'-phosphate (PLP). The sequence is that of Pyridoxine/pyridoxamine 5'-phosphate oxidase from Rubrobacter xylanophilus (strain DSM 9941 / JCM 11954 / NBRC 16129 / PRD-1).